The primary structure comprises 304 residues: Flagellin (304 aa).

The protein belongs to the bacterial flagellin family. As to quaternary structure, interacts with FliW in a 1:1 complex. Forms a 3-way complex of Hag, FliS and FliW, in which Flis and FliW do not directly interact.

The protein localises to the secreted. The protein resides in the bacterial flagellum. It is found in the cell wall. In terms of biological role, flagellin is the subunit which polymerizes to form the filaments of bacterial flagella. Assembly into flagella requires FliW. Acts as a homeostatic autoinhibitory regulator to control its own cytoplasmic levels. Partner switching by flagellin between FliW and CsrA provides a flagellar assembly checkpoint to tightly control the timing of flagellin synthesis. Flagellin binds to assembly factor FliW, freeing translation regulator CsrA to repress translation of the flagellin mRNA. When the flagellar hook is assembled flagellin is secreted, depleting intracellular flagellin, which frees FliW to interact with CsrA. This derepresses flagellin translation and provides protein for flagellar assembly. Once the flagellar filament is completed cytoplasmic flagellin levels rise and CsrA translation repression of flagellin reinitiates. The polypeptide is Flagellin (Bacillus subtilis (strain 168)).